We begin with the raw amino-acid sequence, 157 residues long: UPF0251 protein CLK_0815 (157 aa).

Belongs to the UPF0251 family.

The protein is UPF0251 protein CLK_0815 of Clostridium botulinum (strain Loch Maree / Type A3).